The chain runs to 694 residues: Outer dynein arm-docking complex subunit 1 (694 aa).

Coiled coils occupy residues 27 to 192 (ELSR…RYLN) and 222 to 259 (REEAKTKMGMLQERAEKELAQSDTEAQILLRQISHLEQ). The tract at residues 271-290 (RQPDPGVVQKEEQRAWETSE) is disordered. The stretch at 339–418 (NFINEQNSEL…EKIKTDIQVL (80 aa)) forms a coiled coil. Disordered regions lie at residues 531-550 (QDEEGSPKKRDSSPSLTLSS) and 571-694 (SILS…RGYN). Phosphoserine is present on residues Ser536, Ser542, Ser543, and Ser545. Positions 628–642 (TSSSSYLGSTGYLET) are enriched in low complexity. Polar residues predominate over residues 655 to 672 (SQSMGSEMSRGFSSGSGQ). A compositionally biased stretch (low complexity) spans 673 to 687 (TSSAAPASRPSSATS).

It belongs to the ODA1/DCC2 family. Component of the outer dynein arm-docking complex along with ODAD2, ODAD3, ODAD4 and CLXN. Interacts with ODAD3. Interacts with ODAD4; this interaction may facilitate the recruitment and/or attachment of outer dynein arm docking complex proteins,including ODAD1, ODAD3, and ODAD4 to ciliary axonemes. Interacts with DNAH9. Interacts with MNS1. Interacts with PIERCE1 and PIERCE2; the interactions link the outer dynein arms docking complex (ODA-DC) to the internal microtubule inner proteins (MIP) in cilium axoneme.

It is found in the cytoplasm. It localises to the cytoskeleton. The protein localises to the cilium axoneme. In terms of biological role, component of the outer dynein arm-docking complex that mediates outer dynein arms (ODA) binding onto the doublet microtubule. Involved in mediating assembly of both ODAs and their axonemal docking complex onto ciliary microtubules. This is Outer dynein arm-docking complex subunit 1 (Odad1) from Rattus norvegicus (Rat).